The chain runs to 312 residues: Ribosomal RNA small subunit methyltransferase H (312 aa).

S-adenosyl-L-methionine-binding positions include 34-36 (AGH), Asp54, Phe81, Asp102, and Gln109.

Belongs to the methyltransferase superfamily. RsmH family.

Its subcellular location is the cytoplasm. The enzyme catalyses cytidine(1402) in 16S rRNA + S-adenosyl-L-methionine = N(4)-methylcytidine(1402) in 16S rRNA + S-adenosyl-L-homocysteine + H(+). Its function is as follows. Specifically methylates the N4 position of cytidine in position 1402 (C1402) of 16S rRNA. In Citrifermentans bemidjiense (strain ATCC BAA-1014 / DSM 16622 / JCM 12645 / Bem) (Geobacter bemidjiensis), this protein is Ribosomal RNA small subunit methyltransferase H.